A 190-amino-acid polypeptide reads, in one-letter code: Female-specific histamine-binding protein 2 (190 aa).

Residues 1 to 19 (MKLLILSLALVLALSQVKG) form the signal peptide. Residues S39, D43, Y55, D58, W61, E101, F117, Y119, F127, D139, E154, and W156 each coordinate histamine. 2 cysteine pairs are disulfide-bonded: C67–C188 and C138–C167.

It belongs to the calycin superfamily. Histamine-binding salivary protein family. As to quaternary structure, monomer. As to expression, expressed in salivary glands.

Its subcellular location is the secreted. Salivary tick protein that acts by scavenging histamine at the wound site, outcompeting histamine receptors for histamine, thereby overcoming host inflammatory responses. Binds histamine with a high-affinity (Kd=1.7 nM). Contains two binding histamine sites (H and L), that appear to bind histamine with differing affinities (high and low). This Rhipicephalus appendiculatus (Brown ear tick) protein is Female-specific histamine-binding protein 2.